A 344-amino-acid polypeptide reads, in one-letter code: 2-aminoethylphosphonate--pyruvate transaminase (344 aa).

Lys-194 is subject to N6-(pyridoxal phosphate)lysine.

The protein belongs to the class-V pyridoxal-phosphate-dependent aminotransferase family. PhnW subfamily. As to quaternary structure, homodimer. Pyridoxal 5'-phosphate serves as cofactor.

It catalyses the reaction (2-aminoethyl)phosphonate + pyruvate = phosphonoacetaldehyde + L-alanine. Involved in phosphonate degradation. The sequence is that of 2-aminoethylphosphonate--pyruvate transaminase from Bacillus cereus.